Here is a 61-residue protein sequence, read N- to C-terminus: Opistoporin-4 (61 aa).

Residues 45-61 (EAGQMPFDEFMDILHYY) constitute a propeptide that is removed on maturation.

Belongs to the non-disulfide-bridged peptide (NDBP) superfamily. Long chain multifunctional peptide (group 2) family. In terms of tissue distribution, expressed by the venom gland.

The protein resides in the secreted. It localises to the target cell membrane. In terms of biological role, at high concentrations, acts as a pore former in cellular membranes and causes the leakage of the cells. At submicromolar concentrations, degranulates granulocytes and has a weak hemolytic activity against human erythrocytes. Also strongly inhibits the production of superoxide anions. Has a strong antibacterial activity against Gram-negative bacteria but is less active against Gram-positive bacteria. Also has antifungal activity. The protein is Opistoporin-4 of Opistophthalmus carinatus (African yellow leg scorpion).